Here is a 244-residue protein sequence, read N- to C-terminus: Geranylgeranylglyceryl phosphate synthase (244 aa).

The Mg(2+) site is built by Asp-21 and Thr-50. Residues 168 to 174, 200 to 201, and 222 to 223 contribute to the sn-glycerol 1-phosphate site; these read YLEAGSG, GG, and GN.

The protein belongs to the GGGP/HepGP synthase family. Group II subfamily. Requires Mg(2+) as cofactor.

It is found in the cytoplasm. The enzyme catalyses sn-glycerol 1-phosphate + (2E,6E,10E)-geranylgeranyl diphosphate = sn-3-O-(geranylgeranyl)glycerol 1-phosphate + diphosphate. The protein operates within membrane lipid metabolism; glycerophospholipid metabolism. Its function is as follows. Prenyltransferase that catalyzes the transfer of the geranylgeranyl moiety of geranylgeranyl diphosphate (GGPP) to the C3 hydroxyl of sn-glycerol-1-phosphate (G1P). This reaction is the first ether-bond-formation step in the biosynthesis of archaeal membrane lipids. The polypeptide is Geranylgeranylglyceryl phosphate synthase (Sulfurisphaera tokodaii (strain DSM 16993 / JCM 10545 / NBRC 100140 / 7) (Sulfolobus tokodaii)).